A 229-amino-acid chain; its full sequence is Synaptogyrin-3 (229 aa).

Met1 carries the N-acetylmethionine modification. Residues Phe20–Arg172 enclose the MARVEL domain. The next 4 helical transmembrane spans lie at Val30–Asn50, Phe70–Val90, Val105–Phe125, and Ala148–Leu168. Positions Gln209–Gly223 are enriched in polar residues. The disordered stretch occupies residues Gln209–Tyr229.

It belongs to the synaptogyrin family. As to quaternary structure, interacts (via N-terminus) with SLC6A3 (via N-terminus). May interact with VMAT2. As to expression, specifically expressed in brain. Found in the brain across the dorsal and ventral corpus striatum as well as in the cortex.

It localises to the cytoplasmic vesicle. The protein resides in the secretory vesicle. Its subcellular location is the synaptic vesicle membrane. The protein localises to the synapse. Its function is as follows. May play a role in regulated exocytosis. May indirectly regulate the activity of the plasma membrane dopamine transporter SLC6A3 and thereby regulate dopamine transport back from the synaptic cleft into the presynaptic terminal. This is Synaptogyrin-3 from Mus musculus (Mouse).